A 271-amino-acid chain; its full sequence is Putative phosphoenolpyruvate synthase regulatory protein (271 aa).

151-158 contacts ADP; the sequence is GVSRSGKT.

It belongs to the pyruvate, phosphate/water dikinase regulatory protein family. PSRP subfamily.

The catalysed reaction is [pyruvate, water dikinase] + ADP = [pyruvate, water dikinase]-phosphate + AMP + H(+). It catalyses the reaction [pyruvate, water dikinase]-phosphate + phosphate + H(+) = [pyruvate, water dikinase] + diphosphate. Bifunctional serine/threonine kinase and phosphorylase involved in the regulation of the phosphoenolpyruvate synthase (PEPS) by catalyzing its phosphorylation/dephosphorylation. The polypeptide is Putative phosphoenolpyruvate synthase regulatory protein (Burkholderia multivorans (strain ATCC 17616 / 249)).